A 147-amino-acid polypeptide reads, in one-letter code: Transcriptional regulator MraZ (147 aa).

SpoVT-AbrB domains lie at 5–50 (AVAL…PLTA) and 79–122 (AQEE…SDAG).

The protein belongs to the MraZ family. As to quaternary structure, forms oligomers.

The protein localises to the cytoplasm. It localises to the nucleoid. The chain is Transcriptional regulator MraZ from Azoarcus sp. (strain BH72).